A 650-amino-acid polypeptide reads, in one-letter code: Probable Xaa-Pro aminopeptidase P (650 aa).

Residues aspartate 447, aspartate 458, glutamate 556, and glutamate 570 each coordinate Mn(2+).

The protein belongs to the peptidase M24B family. Mn(2+) is required as a cofactor.

The enzyme catalyses Release of any N-terminal amino acid, including proline, that is linked to proline, even from a dipeptide or tripeptide.. Catalyzes the removal of a penultimate prolyl residue from the N-termini of peptides. The polypeptide is Probable Xaa-Pro aminopeptidase P (AMPP) (Phaeosphaeria nodorum (strain SN15 / ATCC MYA-4574 / FGSC 10173) (Glume blotch fungus)).